The primary structure comprises 191 residues: MFLIVGLGNPGSKYDNTRHNIGFEVIDNISNEYNIDINRQKFKGVYGEGFIANNKVILLKPTTYMNLSGDSVREVANFYKISNENIIVIYDDISLDIGRLRIREKGSAGGHNGIKSIIANLSTDVFPRIKVGVGQPNDNLVDYVLGKFSKEEKEVLKESIEAATNSVEEIIKQDINSAMNKFNGFKANKSI.

Tyr14 contacts tRNA. The active-site Proton acceptor is His19. Positions 64, 66, and 112 each coordinate tRNA.

The protein belongs to the PTH family. Monomer.

Its subcellular location is the cytoplasm. It catalyses the reaction an N-acyl-L-alpha-aminoacyl-tRNA + H2O = an N-acyl-L-amino acid + a tRNA + H(+). Its function is as follows. Hydrolyzes ribosome-free peptidyl-tRNAs (with 1 or more amino acids incorporated), which drop off the ribosome during protein synthesis, or as a result of ribosome stalling. Functionally, catalyzes the release of premature peptidyl moieties from peptidyl-tRNA molecules trapped in stalled 50S ribosomal subunits, and thus maintains levels of free tRNAs and 50S ribosomes. In Clostridium botulinum (strain Alaska E43 / Type E3), this protein is Peptidyl-tRNA hydrolase.